Here is an 871-residue protein sequence, read N- to C-terminus: Scavenger receptor class F member 2 (871 aa).

Residues 1–20 are disordered; that stretch reads MEGAGPRGAGPARRRGAGGP. The signal sequence occupies residues 1–43; sequence MEGAGPRGAGPARRRGAGGPPSPLLPSLLLLLLLWMLPDTVAP. Topologically, residues 44–441 are extracellular; the sequence is QELNPRGRNV…ACHLETNQRK (398 aa). EGF-like domains lie at 71-110, 122-153, 148-182, 183-212, 213-241, and 236-270; these read QGDE…ANCD, CKEL…ARCE, WGAR…AQCA, SACY…RSCN, NQCA…ARCD, and FGAR…KYCR. Intrachain disulfides connect C75–C86, C80–C98, C100–C109, C126–C134, C128–C141, C143–C152, C156–C163, C158–C170, C172–C181, C185–C193, C187–C200, C202–C211, C215–C222, C217–C229, C231–C240, C244–C251, C246–C258, and C260–C269. N-linked (GlcNAc...) asparagine glycosylation is present at N83. N-linked (GlcNAc...) asparagine glycans are attached at residues N310 and N365. Positions 372-403 constitute an EGF-like 7 domain; it reads CAFVCADCGSGHCDFQSGRCLCSPGVHGPHCN. 3 disulfides stabilise this stretch: C376–C384, C379–C391, and C393–C402. N403 is a glycosylation site (N-linked (GlcNAc...) asparagine). The chain crosses the membrane as a helical span at residues 442-462; that stretch reads GVMGAGALLVLLVCLLLSLLG. Residues 463 to 871 lie on the Cytoplasmic side of the membrane; it reads CCCACRGKDP…ELGRAGAPTL (409 aa). At S551 the chain carries Phosphoserine. Residues 570–579 are compositionally biased toward basic and acidic residues; the sequence is EAPAESRDPE. The disordered stretch occupies residues 570 to 871; that stretch reads EAPAESRDPE…ELGRAGAPTL (302 aa). S613 bears the Phosphoserine mark. The residue at position 628 (Y628) is a Phosphotyrosine. Over residues 632–643 the composition is skewed to basic and acidic residues; it reads ARREARPARARG. Residues S651, S653, S710, S718, and S742 each carry the phosphoserine modification. Residues 705–725 show a composition bias toward basic and acidic residues; that stretch reads TPSDKSAHTVEHGSPRTRDPT. Residues 821–831 are compositionally biased toward low complexity; it reads PPATETPGPEK. Residues 844–856 are compositionally biased toward basic residues; sequence KKTPIQKPPRKKS. Positions 861–871 are enriched in low complexity; the sequence is GELGRAGAPTL.

In terms of assembly, homophilic and heterophilic interaction via its extracellular domain. Interacts with SCARF1. The heterophilic interaction with SCARF1, which is stronger than the homophilic interaction with itself, is suppressed by the presence of SCARF1 ligand such as Ac-LDL. In terms of tissue distribution, predominantly expressed in endothelial cells. Expressed in heart, placenta, lung, kidney, spleen, small intestine and ovary.

Its subcellular location is the membrane. Functionally, probable adhesion protein, which mediates homophilic and heterophilic interactions. In contrast to SCARF1, it poorly mediates the binding and degradation of acetylated low density lipoprotein (Ac-LDL). The sequence is that of Scavenger receptor class F member 2 (SCARF2) from Homo sapiens (Human).